Reading from the N-terminus, the 832-residue chain is Polyphosphoinositide phosphatase (832 aa).

In terms of domain architecture, SAC spans 145–491; sequence IEKVDLARTF…GDAIALQYGG (347 aa).

As to quaternary structure, component of the PI(3,5)P2 regulatory complex. Mg(2+) serves as cofactor.

The protein localises to the cytoplasm. It is found in the vacuole membrane. The enzyme catalyses a 1,2-diacyl-sn-glycero-3-phospho-(1D-myo-inositol-3,5-bisphosphate) + H2O = a 1,2-diacyl-sn-glycero-3-phospho-(1D-myo-inositol-3-phosphate) + phosphate. Its function is as follows. The PI(3,5)P2 regulatory complex regulates both the synthesis and turnover of phosphatidylinositol 3,5-bisphosphate (PtdIns(3,5)P2). The sequence is that of Polyphosphoinositide phosphatase from Schizosaccharomyces pombe (strain 972 / ATCC 24843) (Fission yeast).